The following is a 297-amino-acid chain: Urease accessory protein UreD (297 aa).

Residues 1 to 18 show a composition bias toward low complexity; that stretch reads MNSSAASPPAVSPHAAPS. Disordered stretches follow at residues 1–20 and 178–201; these read MNSS…PSRT and VDQA…PRRR.

The protein belongs to the UreD family. UreD, UreF and UreG form a complex that acts as a GTP-hydrolysis-dependent molecular chaperone, activating the urease apoprotein by helping to assemble the nickel containing metallocenter of UreC. The UreE protein probably delivers the nickel.

Its subcellular location is the cytoplasm. Functionally, required for maturation of urease via the functional incorporation of the urease nickel metallocenter. The sequence is that of Urease accessory protein UreD from Parafrankia sp. (strain EAN1pec).